The primary structure comprises 387 residues: 3-ketoacyl-CoA thiolase (387 aa).

The active-site Acyl-thioester intermediate is the Cys91. Residues His343 and Cys373 each act as proton acceptor in the active site.

The protein belongs to the thiolase-like superfamily. Thiolase family. As to quaternary structure, heterotetramer of two alpha chains (FadB) and two beta chains (FadA).

Its subcellular location is the cytoplasm. It catalyses the reaction an acyl-CoA + acetyl-CoA = a 3-oxoacyl-CoA + CoA. It participates in lipid metabolism; fatty acid beta-oxidation. In terms of biological role, catalyzes the final step of fatty acid oxidation in which acetyl-CoA is released and the CoA ester of a fatty acid two carbons shorter is formed. The sequence is that of 3-ketoacyl-CoA thiolase from Shigella sonnei (strain Ss046).